Consider the following 121-residue polypeptide: Small ribosomal subunit protein uS13 (121 aa).

The disordered stretch occupies residues His-91 to Lys-121. Residues Ala-106 to Lys-121 show a composition bias toward basic residues.

Belongs to the universal ribosomal protein uS13 family. As to quaternary structure, part of the 30S ribosomal subunit. Forms a loose heterodimer with protein S19. Forms two bridges to the 50S subunit in the 70S ribosome.

In terms of biological role, located at the top of the head of the 30S subunit, it contacts several helices of the 16S rRNA. In the 70S ribosome it contacts the 23S rRNA (bridge B1a) and protein L5 of the 50S subunit (bridge B1b), connecting the 2 subunits; these bridges are implicated in subunit movement. Contacts the tRNAs in the A and P-sites. The chain is Small ribosomal subunit protein uS13 from Bacillus cereus (strain G9842).